Reading from the N-terminus, the 390-residue chain is Pepsin B (390 aa).

An N-terminal signal peptide occupies residues 1-16 (MKIQVLVLVCLHLSEG). Residues 17 to 59 (VERIILKKGKSIRQVMEERGVLETFLRNHPKVDPAAKYLFNND) constitute a propeptide, activation peptide. A Peptidase A1 domain is found at 74-387 (YFGEISIGTP…DMAANRVGFA (314 aa)). The active site involves D92. 2 disulfides stabilise this stretch: C105/C110 and C269/C273. Residue D278 is part of the active site. C312 and C345 form a disulfide bridge.

The protein belongs to the peptidase A1 family.

Its subcellular location is the secreted. The enzyme catalyses Degradation of gelatin, little activity on hemoglobin. Specificity on B chain of insulin more restricted than that of pepsin A. Does not cleave 1-Phe-|-Val-2, 4-Gln-|-His-5 or 23-Gly-|-Phe-24.. Functionally, hydrolyzes various peptides including beta-endorphin, insulin B chain, dynorphin A, and neurokinin A, with high specificity for the cleavage of the Phe-Xaa bonds. The protein is Pepsin B (PGB) of Canis lupus familiaris (Dog).